Consider the following 421-residue polypeptide: Core protease I7 homolog (421 aa).

Catalysis depends on residues histidine 242, aspartate 249, and cysteine 329.

It belongs to the peptidase C57 family.

It localises to the virion. Its function is as follows. Late protein responsible for processing most or all of the viral core and membrane proteins known to undergo morphogenesis-associated proteolysis. These proteolytic events are involved in the transformation of immature virions (IV) into mature virions (MV). This Fowlpox virus (strain NVSL) (FPV) protein is Core protease I7 homolog.